Here is a 533-residue protein sequence, read N- to C-terminus: Flavin-dependent halogenase armH4 (533 aa).

Residues glycine 16, alanine 19, and glutamate 49 each coordinate FAD. Chloride-binding residues include serine 337 and glycine 338. Valine 339 provides a ligand contact to FAD.

The protein belongs to the flavin-dependent halogenase family.

It carries out the reaction melleolide F + FADH2 + chloride + O2 = 6'-chloromelleolide F + FAD + 2 H2O + H(+). It catalyses the reaction melleolide F + bromide + FADH2 + O2 = 6'-bromomelleolide F + FAD + 2 H2O. In terms of biological role, flavin-dependent halogenase involved in the biosynthesis of melleolides, a range of antifungal and phytotoxic polyketide derivatives composed of an orsellinic acid (OA) moiety esterified to various sesquiterpene alcohols. The halogenase catalyzes the transfer of a single chlorine atom to the melleolide backbone, resulting in a 6'-chloromelleolide product. The enzyme acts on free substrate and does not depend on carrier-protein-dependent acceptor molecules. Can also catalyze the transfer of a single bromine atom to the melleolide backbone in vitro. The chain is Flavin-dependent halogenase armH4 from Armillaria mellea (Honey mushroom).